A 158-amino-acid chain; its full sequence is 2-C-methyl-D-erythritol 2,4-cyclodiphosphate synthase (158 aa).

Residues Asp-9 and His-11 each contribute to the a divalent metal cation site. Residues 9–11 (DVH) and 35–36 (HS) contribute to the 4-CDP-2-C-methyl-D-erythritol 2-phosphate site. His-43 contributes to the a divalent metal cation binding site. 4-CDP-2-C-methyl-D-erythritol 2-phosphate-binding positions include 57 to 59 (DIG), 62 to 66 (FPDTD), 133 to 136 (TTSE), Phe-140, and Arg-143.

This sequence belongs to the IspF family. Homotrimer. A divalent metal cation serves as cofactor.

It carries out the reaction 4-CDP-2-C-methyl-D-erythritol 2-phosphate = 2-C-methyl-D-erythritol 2,4-cyclic diphosphate + CMP. Its pathway is isoprenoid biosynthesis; isopentenyl diphosphate biosynthesis via DXP pathway; isopentenyl diphosphate from 1-deoxy-D-xylulose 5-phosphate: step 4/6. Functionally, involved in the biosynthesis of isopentenyl diphosphate (IPP) and dimethylallyl diphosphate (DMAPP), two major building blocks of isoprenoid compounds. Catalyzes the conversion of 4-diphosphocytidyl-2-C-methyl-D-erythritol 2-phosphate (CDP-ME2P) to 2-C-methyl-D-erythritol 2,4-cyclodiphosphate (ME-CPP) with a corresponding release of cytidine 5-monophosphate (CMP). This is 2-C-methyl-D-erythritol 2,4-cyclodiphosphate synthase from Pasteurella multocida (strain Pm70).